A 252-amino-acid polypeptide reads, in one-letter code: uncharacterized protein (252 aa).

This is an uncharacterized protein from Saccharolobus islandicus (Sulfolobus islandicus).